We begin with the raw amino-acid sequence, 114 residues long: T cell receptor beta variable 6-2 (114 aa).

Positions 1-21 (MSLGLLCCGAFSLLWAGPVNA) are cleaved as a signal peptide. The region spanning 22–114 (GVTQTPKFRV…TSVYFCASSY (93 aa)) is the Ig-like domain. Cysteine 42 and cysteine 110 form a disulfide bridge. N-linked (GlcNAc...) asparagine glycosylation occurs at asparagine 84.

As to quaternary structure, alpha-beta TR is a heterodimer composed of an alpha and beta chain; disulfide-linked. The alpha-beta TR is associated with the transmembrane signaling CD3 coreceptor proteins to form the TR-CD3 (TcR or TCR). The assembly of alpha-beta TR heterodimers with CD3 occurs in the endoplasmic reticulum where a single alpha-beta TR heterodimer associates with one CD3D-CD3E heterodimer, one CD3G-CD3E heterodimer and one CD247 homodimer forming a stable octameric structure. CD3D-CD3E and CD3G-CD3E heterodimers preferentially associate with TR alpha and TR beta chains, respectively. The association of the CD247 homodimer is the last step of TcR assembly in the endoplasmic reticulum and is required for transport to the cell surface.

The protein localises to the cell membrane. In terms of biological role, v region of the variable domain of T cell receptor (TR) beta chain that participates in the antigen recognition. Alpha-beta T cell receptors are antigen specific receptors which are essential to the immune response and are present on the cell surface of T lymphocytes. Recognize peptide-major histocompatibility (MH) (pMH) complexes that are displayed by antigen presenting cells (APC), a prerequisite for efficient T cell adaptive immunity against pathogens. Binding of alpha-beta TR to pMH complex initiates TR-CD3 clustering on the cell surface and intracellular activation of LCK that phosphorylates the ITAM motifs of CD3G, CD3D, CD3E and CD247 enabling the recruitment of ZAP70. In turn ZAP70 phosphorylates LAT, which recruits numerous signaling molecules to form the LAT signalosome. The LAT signalosome propagates signal branching to three major signaling pathways, the calcium, the mitogen-activated protein kinase (MAPK) kinase and the nuclear factor NF-kappa-B (NF-kB) pathways, leading to the mobilization of transcription factors that are critical for gene expression and essential for T cell growth and differentiation. The T cell repertoire is generated in the thymus, by V-(D)-J rearrangement. This repertoire is then shaped by intrathymic selection events to generate a peripheral T cell pool of self-MH restricted, non-autoaggressive T cells. Post-thymic interaction of alpha-beta TR with the pMH complexes shapes TR structural and functional avidity. The chain is T cell receptor beta variable 6-2 from Homo sapiens (Human).